Reading from the N-terminus, the 1163-residue chain is E3 ubiquitin-protein ligase TRIM33 (1163 aa).

The tract at residues 1 to 119 is disordered; that stretch reads MEVEASGTED…ASTSSSSSTP (119 aa). Over residues 27–38 the composition is skewed to basic and acidic residues; sequence TETKEAADEAKS. Residues 45-54 show a composition bias toward low complexity; that stretch reads TPTTSSDSSS. Pro residues predominate over residues 72–87; the sequence is DPPPPPPPPPPPPPST. Low complexity predominate over residues 88–99; that stretch reads PADSTAAAASPA. Residues 129 to 188 form an RING-type zinc finger; sequence CAVCKQSLQNRDCEPKLLPCLHSFCLKCIPQPDRKITMPVQGPHGQDTRIVNVMRCTVCH. A B box-type 1; atypical zinc finger spans residues 215 to 268; that stretch reads NSTQVCTSCEDNASAIGFCVECGEWLCKTCIEAHQRVKFTKDHKIRKKEEVSPE. Zn(2+)-binding residues include cysteine 220, cysteine 223, cysteine 244, histidine 257, cysteine 280, histidine 283, cysteine 303, and histidine 308. The segment at 275-316 adopts a B box-type 2 zinc-finger fold; that stretch reads QRPVFCPVHKQEALKLFCETCDTLTCRDCQLLEHKEHRYQFL. Residues 345 to 369 adopt a coiled-coil conformation; that stretch reads ASEVQKRLKEVAETHKKVEHEIKIA. The segment covering 524–533 has biased composition (low complexity); sequence MQQAAIAQKH. Disordered stretches follow at residues 524-555, 575-599, 656-706, 753-848, and 867-918; these read MQQA…QQQQ, QIQQ…QMIQ, LQRQ…VITP, TVGP…PLPI, and NVKS…KEDD. Basic residues predominate over residues 534 to 548; it reads QQQHQHHQQQQHQHQ. Residues 580-590 show a composition bias toward polar residues; it reads MRIASQMSQHP. 2 stretches are compositionally biased toward low complexity: residues 678-691 and 753-797; these read SAAN…ASMA and TVGP…SGTT. Residues 821–830 are compositionally biased toward basic and acidic residues; that stretch reads KTERTKDGRR. Polar residues predominate over residues 870–889; the sequence is SEPQSDNLSSCTNPNSRATL. The PHD-type zinc finger occupies 921-968; the sequence is EDWCAVCQNGGELLCCDHCPKVFHITCHIPTLKSSPSGDWMCTFCRNL. One can recognise a Bromo domain in the interval 991–1114; the sequence is AMSPEEQRRC…LYFEERLLEI (124 aa). A disordered region spans residues 1128 to 1147; sequence TQIEAEKEDSDDSDDDIIQP. The span at 1133-1144 shows a compositional bias: acidic residues; that stretch reads EKEDSDDSDDDI.

The protein localises to the nucleus. It catalyses the reaction S-ubiquitinyl-[E2 ubiquitin-conjugating enzyme]-L-cysteine + [acceptor protein]-L-lysine = [E2 ubiquitin-conjugating enzyme]-L-cysteine + N(6)-ubiquitinyl-[acceptor protein]-L-lysine.. It functions in the pathway protein modification; protein ubiquitination. In terms of biological role, may act as an E3 ubiquitin-protein ligase and a transcriptional repressor. Involved in the regulation of embryonic and adult hematopoiesis. Required for normal development and survival of both committed erythroid progenitor cells and posterior mesenchymal cells. The protein is E3 ubiquitin-protein ligase TRIM33 (trim33) of Danio rerio (Zebrafish).